A 161-amino-acid polypeptide reads, in one-letter code: E3 ubiquitin ligase complex SCF subunit sconC (161 aa).

Residues 102 to 161 (ILAANYLDIKGLLDVGCKTVANMIKGKSPEEIRKTFNIQNDFTPEEEDQIRRENEWAEDR) form an interaction with the F-box domain of F-box proteins region.

It belongs to the SKP1 family. Component of the SCF (SKP1-CUL1-F-box protein) E3 ubiquitin ligase complexes.

It participates in protein modification; protein ubiquitination. In terms of biological role, essential component of the SCF (SKP1-CUL1-F-box protein) E3 ubiquitin ligase complexes, which mediate the ubiquitination and subsequent proteasomal degradation of target proteins. Controls sulfur metabolite repression, probably by mediating the inactivation or degradation of the metR transcription factor. The sequence is that of E3 ubiquitin ligase complex SCF subunit sconC (sconC) from Aspergillus flavus (strain ATCC 200026 / FGSC A1120 / IAM 13836 / NRRL 3357 / JCM 12722 / SRRC 167).